The following is a 511-amino-acid chain: Glutamyl-tRNA(Gln) amidotransferase subunit B, mitochondrial (511 aa).

The transit peptide at 1–6 (MLRRYL) directs the protein to the mitochondrion.

It belongs to the GatB/GatE family. GatB subfamily. In terms of assembly, subunit of the heterotrimeric GatFAB amidotransferase (AdT) complex, composed of A, B and F subunits.

Its subcellular location is the mitochondrion. The enzyme catalyses L-glutamyl-tRNA(Gln) + L-glutamine + ATP + H2O = L-glutaminyl-tRNA(Gln) + L-glutamate + ADP + phosphate + H(+). Functionally, allows the formation of correctly charged Gln-tRNA(Gln) through the transamidation of misacylated Glu-tRNA(Gln) in the mitochondria. The reaction takes place in the presence of glutamine and ATP through an activated gamma-phospho-Glu-tRNA(Gln). The protein is Glutamyl-tRNA(Gln) amidotransferase subunit B, mitochondrial of Lodderomyces elongisporus (strain ATCC 11503 / CBS 2605 / JCM 1781 / NBRC 1676 / NRRL YB-4239) (Yeast).